The chain runs to 382 residues: 4-hydroxy-3-methylbut-2-en-1-yl diphosphate synthase (flavodoxin) (382 aa).

Residues cysteine 290, cysteine 293, cysteine 327, and glutamate 334 each contribute to the [4Fe-4S] cluster site.

The protein belongs to the IspG family. [4Fe-4S] cluster serves as cofactor.

It catalyses the reaction (2E)-4-hydroxy-3-methylbut-2-enyl diphosphate + oxidized [flavodoxin] + H2O + 2 H(+) = 2-C-methyl-D-erythritol 2,4-cyclic diphosphate + reduced [flavodoxin]. It functions in the pathway isoprenoid biosynthesis; isopentenyl diphosphate biosynthesis via DXP pathway; isopentenyl diphosphate from 1-deoxy-D-xylulose 5-phosphate: step 5/6. In terms of biological role, converts 2C-methyl-D-erythritol 2,4-cyclodiphosphate (ME-2,4cPP) into 1-hydroxy-2-methyl-2-(E)-butenyl 4-diphosphate. This is 4-hydroxy-3-methylbut-2-en-1-yl diphosphate synthase (flavodoxin) from Rhodopirellula baltica (strain DSM 10527 / NCIMB 13988 / SH1).